Here is a 62-residue protein sequence, read N- to C-terminus: Synergistic-type venom protein S2C4 (62 aa).

Intrachain disulfides connect C3/C24, C17/C42, and C46/C57.

The protein belongs to the three-finger toxin family. Short-chain subfamily. Aminergic toxin sub-subfamily. As to quaternary structure, homodimer; disulfide-linked. In terms of tissue distribution, expressed by the venom gland.

Its subcellular location is the secreted. Its function is as follows. This protein shows a synergetic toxic effect in that it enhances the toxicity of other toxins. In Dendroaspis jamesoni kaimosae (Eastern Jameson's mamba), this protein is Synergistic-type venom protein S2C4.